A 400-amino-acid polypeptide reads, in one-letter code: Putative F-box protein At5g41510 (400 aa).

Residues 2–47 enclose the F-box domain; sequence ATMISNLPRDLIEEIFSRVPLTSMKAVRLTCKSWNNLSKSESFTKV.

In Arabidopsis thaliana (Mouse-ear cress), this protein is Putative F-box protein At5g41510.